The following is a 313-amino-acid chain: Ribosomal RNA small subunit methyltransferase H (313 aa).

Residues 33 to 35 (GGH), aspartate 53, phenylalanine 80, aspartate 102, and glutamine 109 contribute to the S-adenosyl-L-methionine site. Residues 291-313 (SDEEMRANPRAQSAKLRAAEKIR) are disordered.

This sequence belongs to the methyltransferase superfamily. RsmH family.

The protein resides in the cytoplasm. It catalyses the reaction cytidine(1402) in 16S rRNA + S-adenosyl-L-methionine = N(4)-methylcytidine(1402) in 16S rRNA + S-adenosyl-L-homocysteine + H(+). Its function is as follows. Specifically methylates the N4 position of cytidine in position 1402 (C1402) of 16S rRNA. The polypeptide is Ribosomal RNA small subunit methyltransferase H (Heliobacterium modesticaldum (strain ATCC 51547 / Ice1)).